Reading from the N-terminus, the 188-residue chain is Protein-arginine kinase activator protein (188 aa).

Short sequence motifs (CXXC metal binding motif) lie at residues 3 to 6, 29 to 32, 87 to 90, and 105 to 108; these read CENC, CQTC, CPSC, and CANC. Positions 145–180 constitute a UVR domain; sequence KRKIEEKNEYLKKLIEIQDFEEAAIVRDEIKALKAE.

Interacts with McsB and CtsR; the CXXC motifs are needed for the binding.

Its function is as follows. Activates the phosphorylation activity of the protein-arginine kinase McsB. May function as an important molecule for oxidative tolerance in various types of stress including that of heavy metals. Binds to Cu(2+), Zn(2+), Co(2+) and Cd(2+) via its CXXC metal binding motifs. The chain is Protein-arginine kinase activator protein from Staphylococcus aureus (strain NCTC 8325 / PS 47).